The sequence spans 418 residues: Protein fuzzy homolog (418 aa).

Belongs to the fuzzy family. Component of the CPLANE (ciliogenesis and planar polarity effectors) complex, composed of INTU, FUZ and WDPCP. Interacts with CPLANE2. Interacts with CPLANE1.

The protein resides in the cytoplasm. Its subcellular location is the cytoskeleton. The protein localises to the cilium basal body. In terms of biological role, probable planar cell polarity effector involved in cilium biogenesis. May regulate protein and membrane transport to the cilium. Proposed to function as core component of the CPLANE (ciliogenesis and planar polarity effectors) complex involved in the recruitment of peripheral IFT-A proteins to basal bodies. May regulate the morphogenesis of hair follicles which depends on functional primary cilia. Binds phosphatidylinositol 3-phosphate with highest affinity, followed by phosphatidylinositol 4-phosphate and phosphatidylinositol 5-phosphate. This chain is Protein fuzzy homolog (FUZ), found in Homo sapiens (Human).